The sequence spans 637 residues: MRSFLLASLASVATLKSAQAHPAHSTRGLSKRGIDLDSYRLKQPVSYTNANDVGSDASISSLTRRATAEETASELVKKVVPGATFRVADNYVGSNGVAHVYFKQTANGLDVDNGDFNVNVGRDGTVFSFGNSFYTGDIPTAPSKSKRDTIEPAAAFKSAVSVLDLPVSAGSATSEPKEAENTFAIKQSEGTVSEPEARLVYVQTNGKLALTWRVETDVLSNWLLTYVDAIDGSQVHAVVDYSADASYQVYPWGINDPTEGERTIVVDPFDKQASEFGWHSDGSKTYDTTRGNNGVAQNNWANKSASEYLNLPRPVSTDLKFHYPYSLNETDFQKYSNASVTQLFYTSNVYHDLLHKLGFNEQAGNFEINNNGAGGAGNDFVFLNAQDGSDFNNANFATPPDGQAARMRMYMWNGTTPFRDCSFDASVIIHEYTHGLSNRLTGGPANSNCLNVLESGGMGEGWSDFYAIATHLKAGDTRETDYPMAPWVSGKPNGIRNYLYSTDINVNPQTYIYVDPQTRVHPIGNIWAGMLYEVLWNLIDKHGKNDAGTPDFDSNGLPTDGKYLAMKIVMEGMALQPCNPNFVSARDAIVDADKILTGGDNKCEIWKGFAKRGLGKDAKYDRVARTESYDLPEGVCA.

Positions 1–20 (MRSFLLASLASVATLKSAQA) are cleaved as a signal peptide. Positions 21–244 (HPAHSTRGLS…VHAVVDYSAD (224 aa)) are excised as a propeptide. N-linked (GlcNAc...) asparagine glycosylation is found at N302, N328, N337, and N413. A Zn(2+)-binding site is contributed by H430. E431 is an active-site residue. H434 lines the Zn(2+) pocket.

Belongs to the peptidase M36 family. Requires Zn(2+) as cofactor.

It localises to the secreted. Secreted metalloproteinase that allows assimilation of proteinaceous substrates. The chain is Extracellular metalloproteinase 2 (MEP2) from Phaeosphaeria nodorum (strain SN15 / ATCC MYA-4574 / FGSC 10173) (Glume blotch fungus).